The sequence spans 748 residues: Antigen peptide transporter 1 (748 aa).

Residues 1–15 (MASSRCPAPRGCRCL) lie on the Cytoplasmic side of the membrane. Residues 16–36 (PGASLAWLGTVLLLLADWVLL) traverse the membrane as a helical segment. The Lumenal segment spans residues 37–53 (RTALPRIFSLLVPTALP). The chain crosses the membrane as a helical span at residues 54–76 (LLRVWAVGLSRWAVLWLGACGVL). The Cytoplasmic portion of the chain corresponds to 77-92 (RATVGSKSENAGAQGW). Residues 93-113 (LAALKPLAAALGLALPGLALF) traverse the membrane as a helical segment. Over 114 to 133 (RELISWGAPGSADSTRLLHW) the chain is Lumenal. The helical transmembrane segment at 134–154 (GSHPTAFVVSYAAALPAAALW) threads the bilayer. Topologically, residues 155–186 (HKLGSLWVPGGQGGSGNPVRRLLGCLGSETRR) are cytoplasmic. Residues 187-207 (LSLFLVLVVLSSLGEMAIPFF) form a helical membrane-spanning segment. In terms of domain architecture, ABC transmembrane type-1 spans 187 to 470 (LSLFLVLVVL…LLSIYPRVQK (284 aa)). Topologically, residues 208–227 (TGRLTDWILQDGSADTFTRN) are lumenal. The helical transmembrane segment at 228 to 248 (LTLMSILTIASAVLEFVGDGI) threads the bilayer. Topologically, residues 249–298 (YNNTMGHVHSHLQGEVFGAVLRQETEFFQQNQTGNIMSRVTEDTSTLSDS) are cytoplasmic. The chain crosses the membrane as a helical span at residues 299-319 (LSENLSLFLWYLVRGLCLLGI). The Lumenal portion of the chain corresponds to 320–328 (MLWGSVSLT). Residues 329–349 (MVTLITLPLLFLLPKKVGKWY) traverse the membrane as a helical segment. The Cytoplasmic segment spans residues 350-418 (QLLEVQVRES…AVNSWTTSIS (69 aa)). The segment at 375-420 (PTVRSFANEEGEAQKFREKLQEIKTLNQKEAVAYAVNSWTTSISGM) is part of the peptide-binding site. A helical membrane pass occupies residues 419 to 439 (GMLLKVGILYIGGQLVTSGAV). The Lumenal portion of the chain corresponds to 440-443 (SSGN). The helical transmembrane segment at 444 to 464 (LVTFVLYQMQFTQAVEVLLSI) threads the bilayer. The interval 453–487 (QFTQAVEVLLSIYPRVQKAVGSSEKIFEYLDRTPR) is part of the peptide-binding site. At 465-748 (YPRVQKAVGS…MVQAPADAPE (284 aa)) the chain is on the cytoplasmic side. An ABC transporter domain is found at 503-742 (VQFQDVSFAY…KGCYWAMVQA (240 aa)). ATP is bound by residues 538–546 (GPNGSGKST), 641–647 (SQLSGGQ), and Q701. S545 contacts Mg(2+).

Belongs to the ABC transporter superfamily. ABCB family. MHC peptide exporter (TC 3.A.1.209) subfamily. As to quaternary structure, heterodimer of TAP1 and TAP2 (TAP1-TAP2). A component of the peptide loading complex (PLC), interacts via TAPBP with MHCI heterodimer; this interaction mediates peptide-MHCI assembly. Recruits TAPBP in a 1:1 stoichiometry. Interacts with classical MHCI such as HLA-A*02-B2M; this interaction is obligatory for the loading of peptide epitopes. Interacts with non-classical MHCI molecules including HLA-E-B2M and HLA-F-B2M as well as PLC component CALR before the peptide loading. Interacts with PSMB5 and PSMB8. (Microbial infection) Interacts with Epstein-Barr virus BNLF2a. In terms of assembly, (Microbial infection) Interacts with herpes simplex virus US12/ICP47. As to quaternary structure, (Microbial infection) Interacts with adenovirus E3-19K glycoprotein, which binds TAP1-TAP2 and acts as a TAPBP inhibitor, preventing TAP1-TAP2 association with MHCI. Requires Mg(2+) as cofactor. Highly expressed in professional APCs monocytes and dendritic cells as well as in lymphocyte subsets T cells, B cells and NK cells.

It is found in the endoplasmic reticulum membrane. It catalyses the reaction a peptide antigen(in) + ATP + H2O = a peptide antigen(out) + ADP + phosphate + H(+). Its activity is regulated as follows. Inhibited at high ER lumenal peptide concentrations. (Microbial infection) Inhibited by herpes simplex virus US12/ICP47 protein, which blocks the peptide-binding site of TAP1-TAP2. With respect to regulation, (Microbial infection) Inhibited by human cytomegalovirus US6 glycoprotein, which binds to the lumenal side of TAP1-TAP2 complex and inhibits peptide translocation by specifically blocking ATP-binding and preventing TAP1-TAP2 conformational rearrangement induced by peptide binding. ABC transporter associated with antigen processing. In complex with TAP2 mediates unidirectional translocation of peptide antigens from cytosol to endoplasmic reticulum (ER) for loading onto MHC class I (MHCI) molecules. Uses the chemical energy of ATP to export peptides against the concentration gradient. During the transport cycle alternates between 'inward-facing' state with peptide binding site facing the cytosol to 'outward-facing' state with peptide binding site facing the ER lumen. Peptide antigen binding to ATP-loaded TAP1-TAP2 induces a switch to hydrolysis-competent 'outward-facing' conformation ready for peptide loading onto nascent MHCI molecules. Subsequently ATP hydrolysis resets the transporter to the 'inward facing' state for a new cycle. Typically transports intracellular peptide antigens of 8 to 13 amino acids that arise from cytosolic proteolysis via IFNG-induced immunoproteasome. Binds peptides with free N- and C-termini, the first three and the C-terminal residues being critical. Preferentially selects peptides having a highly hydrophobic residue at position 3 and hydrophobic or charged residues at the C-terminal anchor. Proline at position 2 has the most destabilizing effect. As a component of the peptide loading complex (PLC), acts as a molecular scaffold essential for peptide-MHCI assembly and antigen presentation. The protein is Antigen peptide transporter 1 of Homo sapiens (Human).